Consider the following 326-residue polypeptide: DNA-directed RNA polymerase subunit alpha (326 aa).

The alpha N-terminal domain (alpha-NTD) stretch occupies residues 1–231 (MQTALLKPKI…DQLSVFAALE (231 aa)). The tract at residues 247 to 326 (IDPILLRPVD…ENWPPAGLEK (80 aa)) is alpha C-terminal domain (alpha-CTD).

This sequence belongs to the RNA polymerase alpha chain family. As to quaternary structure, homodimer. The RNAP catalytic core consists of 2 alpha, 1 beta, 1 beta' and 1 omega subunit. When a sigma factor is associated with the core the holoenzyme is formed, which can initiate transcription.

The enzyme catalyses RNA(n) + a ribonucleoside 5'-triphosphate = RNA(n+1) + diphosphate. Functionally, DNA-dependent RNA polymerase catalyzes the transcription of DNA into RNA using the four ribonucleoside triphosphates as substrates. The polypeptide is DNA-directed RNA polymerase subunit alpha (Cupriavidus metallidurans (strain ATCC 43123 / DSM 2839 / NBRC 102507 / CH34) (Ralstonia metallidurans)).